The following is a 143-amino-acid chain: Large ribosomal subunit protein uL11 (143 aa).

The protein belongs to the universal ribosomal protein uL11 family. In terms of assembly, part of the ribosomal stalk of the 50S ribosomal subunit. Interacts with L10 and the large rRNA to form the base of the stalk. L10 forms an elongated spine to which L12 dimers bind in a sequential fashion forming a multimeric L10(L12)X complex. One or more lysine residues are methylated.

In terms of biological role, forms part of the ribosomal stalk which helps the ribosome interact with GTP-bound translation factors. In Pseudomonas entomophila (strain L48), this protein is Large ribosomal subunit protein uL11.